The primary structure comprises 66 residues: Large ribosomal subunit protein bL35 (66 aa).

Basic residues-rich tracts occupy residues 1-16 (MPKMKTHRGAAKRVKR) and 38-49 (TKQKRQLRKARL). The segment at 1 to 49 (MPKMKTHRGAAKRVKRTASGQLKRSRAFTSHLFANKSTKQKRQLRKARL) is disordered.

It belongs to the bacterial ribosomal protein bL35 family.

The chain is Large ribosomal subunit protein bL35 from Staphylococcus aureus (strain MSSA476).